Consider the following 403-residue polypeptide: UPF0284 protein PMT_1350 (403 aa).

The protein belongs to the UPF0284 family.

The protein is UPF0284 protein PMT_1350 of Prochlorococcus marinus (strain MIT 9313).